The primary structure comprises 1490 residues: WD repeat-containing protein 7 (1490 aa).

WD repeat units lie at residues 17 to 56 (APTH…QINP), 62 to 104 (GHTA…CIEF), 156 to 199 (ISPD…SDMQ), 324 to 366 (LICP…DKQG), 404 to 443 (NEPL…IVQL), 462 to 507 (GHRN…MKHI), and 558 to 597 (RHLF…LDRC). Disordered regions lie at residues 761–783 (DEEE…YRSS) and 911–945 (GDHM…IVQG). Residues 768–782 (IMRQRREESDPEYRS) show a composition bias toward basic and acidic residues. A Phosphoserine modification is found at Ser-935. The segment covering 936-945 (PPTSSNIVQG) has biased composition (polar residues). WD repeat units lie at residues 1351–1390 (PAIC…CQTI) and 1392–1432 (GHKG…LGSI). At Ser-1456 the chain carries Phosphoserine.

This chain is WD repeat-containing protein 7 (WDR7), found in Homo sapiens (Human).